The chain runs to 516 residues: Probable metalloreductase AIM14 (516 aa).

7 helical membrane-spanning segments follow: residues 18 to 38, 64 to 84, 97 to 117, 128 to 148, 168 to 188, 195 to 215, and 217 to 237; these read IGYG…LLLL, LHLP…YSVI, LSYV…YILS, HMWL…AFVI, LLGF…TGVI, SFYM…PVHA, and PGVA…HALA. Residues 94–207 enclose the Ferric oxidoreductase domain; the sequence is LGRLSYVLLF…MVHQINAFAI (114 aa). The FAD-binding FR-type domain occupies 238-363; it reads RVSFCMSSAV…GGTGISLGLP (126 aa).

Belongs to the ferric reductase (FRE) family. AIM14 subfamily.

It localises to the membrane. Functionally, probable cell surface metalloreductase. May be involved in iron or copper homeostasis. The chain is Probable metalloreductase AIM14 (AIM14) from Eremothecium gossypii (strain ATCC 10895 / CBS 109.51 / FGSC 9923 / NRRL Y-1056) (Yeast).